A 217-amino-acid chain; its full sequence is Adenylate kinase (217 aa).

10–15 serves as a coordination point for ATP; that stretch reads GIGKGT. Residues 30 to 59 form an NMP region; it reads STGDIFRKNFKENTELGTLSKKFIAQGLLV. Residues T31, R36, 57 to 59, 85 to 88, and Q92 contribute to the AMP site; these read LLV and GFPR. An LID region spans residues 126–163; the sequence is GRRICPECGKVYHIEKIPPKNPGICDKDQKTLIQREDD. ATP is bound at residue R127. C130 and C133 together coordinate Zn(2+). 136–137 is an ATP binding site; that stretch reads VY. Zn(2+)-binding residues include C150 and D153. The AMP site is built by R160 and R171. Q199 lines the ATP pocket.

It belongs to the adenylate kinase family. Monomer.

The protein localises to the cytoplasm. The catalysed reaction is AMP + ATP = 2 ADP. Its pathway is purine metabolism; AMP biosynthesis via salvage pathway; AMP from ADP: step 1/1. Its function is as follows. Catalyzes the reversible transfer of the terminal phosphate group between ATP and AMP. Plays an important role in cellular energy homeostasis and in adenine nucleotide metabolism. This is Adenylate kinase from Aster yellows witches'-broom phytoplasma (strain AYWB).